Here is a 557-residue protein sequence, read N- to C-terminus: Hepatocyte nuclear factor 1-beta (557 aa).

A dimerization region spans residues 1–31 (MVSKLTSLQQELLSALLSSGVTKEVLVQALE). The 32-residue stretch at 1-32 (MVSKLTSLQQELLSALLSSGVTKEVLVQALEE) folds into the HNF-p1 domain. Phosphoserine occurs at positions 49, 52, 75, and 80. A disordered region spans residues 64 to 85 (TLTNGHAKGRLSGDEGSEDGDD). Residues 93 to 188 (KELQALNTEE…ILRQFNQTVQ (96 aa)) form the POU-specific atypical domain. The homeobox; HNF1-type DNA-binding region spans 231-311 (MRRNRFKWGP…NRRKEEAFRQ (81 aa)). Positions 324–352 (HSLNPLLSHGSPHHQPSSSPPNKLSGVRY) are disordered. Positions 328 to 344 (PLLSHGSPHHQPSSSPP) are enriched in low complexity.

This sequence belongs to the HNF1 homeobox family. Binds DNA as a dimer. Can form homodimer or heterodimer with HNF1-alpha. Interacts (via HNF-p1 domain) with PCBD1; the interaction increases its transactivation activity.

It localises to the nucleus. Its function is as follows. Transcription factor that binds to the inverted palindrome 5'-GTTAATNATTAAC-3'. Binds to the FPC element in the cAMP regulatory unit of the PLAU gene. Transcriptional activity is increased by coactivator PCBD1. The protein is Hepatocyte nuclear factor 1-beta (HNF1B) of Homo sapiens (Human).